We begin with the raw amino-acid sequence, 2131 residues long: Sodium channel protein para (2131 aa).

Residues 1–148 (MTEDSDSISE…FNPIRRVAIY (148 aa)) lie on the Cytoplasmic side of the membrane. The segment covering 35–48 (HEKQKELERKRAEG) has biased composition (basic and acidic residues). Residues 35–84 (HEKQKELERKRAEGEVPQYGRKKKQKEIRYDDEDEDEGPQPDPTLEQGVP) form a disordered region. Residues 64-73 (YDDEDEDEGP) show a composition bias toward acidic residues. An I repeat occupies 134–467 (WMLDPFNPIR…AAKAAKLEER (334 aa)). A helical membrane pass occupies residues 149–172 (ILVHPLFSLFIITTILVNCILMIM). Over 173–180 (PTTPTVES) the chain is Extracellular. Residues 181-199 (TEVIFTGIYTFESAVKVMA) traverse the membrane as a helical segment. The Cytoplasmic portion of the chain corresponds to 200-212 (RGFILCPFTYLRD). The helical transmembrane segment at 213–231 (AWNWLDFVVIALAYVTMGI) threads the bilayer. Residues 232–237 (DLGNLA) are Extracellular-facing. The helical; Voltage-sensor transmembrane segment at 238–257 (ALRTFRVLRALKTVAIVPGL) threads the bilayer. Residues 258-273 (KTIVGAVIESVKNLRD) are Cytoplasmic-facing. The helical transmembrane segment at 274–297 (VIILTMFSLSVFALMGLQIYMGVL) threads the bilayer. The Extracellular portion of the chain corresponds to 298–373 (TQKCIKKFPL…PNYGYTSFDS (76 aa)). Cys301 and Cys350 are oxidised to a cystine. N-linked (GlcNAc...) asparagine glycosylation is found at Asn313, Asn325, and Asn343. The segment at residues 374–398 (FGWAFLSAFRLMTQDFWEDLYQLVL) is an intramembrane region (pore-forming). The Extracellular segment spans residues 399 to 405 (RAAGPWH). A helical transmembrane segment spans residues 406–427 (MLFFIVIIFLGSFYLVNLILAI). The Cytoplasmic segment spans residues 428–812 (VAMSYDELQK…VWLKFQEWVS (385 aa)). Phosphoserine; by PKA is present on residues Ser553 and Ser570. 2 disordered regions span residues 553–572 (STTS…GSRS) and 671–691 (KESK…TNGG). Residues 680-691 (TRNQSVGATNGG) show a composition bias toward polar residues. An II repeat occupies 799-1069 (DCCWVWLKFQ…IAEAFNRIGR (271 aa)). The helical transmembrane segment at 813–837 (LIVFDPFVELFITLCIVVNTMFMAM) threads the bilayer. Residues 838–848 (DHHDMNKEMER) lie on the Extracellular side of the membrane. A helical transmembrane segment spans residues 849-873 (VLKSGNYFFTATFAIEATMKLMAMS). The Cytoplasmic portion of the chain corresponds to 874–880 (PKYYFQE). Residues 881 to 900 (GWNIFDFIIVALSLLELGLE) traverse the membrane as a helical segment. Residues 901–906 (GVQGLS) are Extracellular-facing. Residues 907–926 (VLRSFRLLRVFKLAKSWPTL) traverse the membrane as a helical; Voltage-sensor segment. The Cytoplasmic portion of the chain corresponds to 927–941 (NLLISIMGRTMGALG). A helical membrane pass occupies residues 942 to 963 (NLTFVLCIIIFIFAVMGMQLFG). The Extracellular segment spans residues 964–985 (KNYHDHKDRFPDGDLPRWNFTD). Residue Asn982 is glycosylated (N-linked (GlcNAc...) asparagine). Residues 986–1006 (FMHSFMIVFRVLCGEWIESMW) constitute an intramembrane region (pore-forming). Residues 1007 to 1013 (DCMYVGD) are Extracellular-facing. Cys1008 and Cys1016 are joined by a disulfide. Residues 1014 to 1041 (VSCIPFFLATVVIGNLVVLNLFLALLLS) traverse the membrane as a helical segment. The Cytoplasmic portion of the chain corresponds to 1042 to 1296 (NFGSSSLSAP…WGNLRLKTFQ (255 aa)). Positions 1166–1240 (DMKNNKPKKS…LDEEGECEEG (75 aa)) are disordered. Positions 1177–1194 (YLNNATDDDTASINSYGS) are enriched in polar residues. Residues 1199–1225 (PFKDESHKGSAETMEGEEKRDASKEDL) are compositionally biased toward basic and acidic residues. Over residues 1226–1240 (GLDEELDEEGECEEG) the composition is skewed to acidic residues. The stretch at 1284–1591 (WQGWGNLRLK…QKKYYNAMKK (308 aa)) is one III repeat. A helical membrane pass occupies residues 1297–1320 (LIENKYFETAVITMILMSSLALAL). Over 1321–1334 (EDVHLPQRPILQDI) the chain is Extracellular. A helical membrane pass occupies residues 1335 to 1359 (LYYMDRIFTVIFFLEMLIKWLALGF). Residues 1360–1365 (KVYFTN) are Cytoplasmic-facing. The chain crosses the membrane as a helical span at residues 1366–1387 (AWCWLDFVIVMVSLINFVASLV). The Extracellular segment spans residues 1388–1391 (GAGG). Residues 1392 to 1413 (IQAFKTMRTLRALRPLRAMSRM) traverse the membrane as a helical; Voltage-sensor segment. Residues 1414–1432 (QGMRVVVNALVQAIPSIFN) lie on the Cytoplasmic side of the membrane. A helical membrane pass occupies residues 1433–1454 (VLLVCLIFWLIFAIMGVQLFAG). Residues 1455-1495 (KYFKCEDMNGTKLSHEIIPNRNACESENYTWVNSAMNFDHV) lie on the Extracellular side of the membrane. N-linked (GlcNAc...) asparagine glycosylation is found at Asn1463 and Asn1482. An intramembrane region (pore-forming) is located at residues 1496–1517 (GNAYLCLFQVATFKGWIQIMND). Over 1518-1533 (AIDSREVDKQPIRETN) the chain is Extracellular. Residues 1534–1560 (IYMYLYFVFFIIFGSFFTLNLFIGVII) traverse the membrane as a helical segment. The Cytoplasmic portion of the chain corresponds to 1561-1614 (DNFNEQKKKAGGSLEMFMTEDQKKYYNAMKKMGSKKPLKAIPRPRWRPQAIVFE). An IV repeat occupies 1601 to 1862 (IPRPRWRPQA…NMYIAVILEN (262 aa)). A helical membrane pass occupies residues 1615-1638 (IVTDKKFDIIIMLFIGLNMFTMTL). Over 1639–1649 (DRYDASDTYNA) the chain is Extracellular. A helical transmembrane segment spans residues 1650-1673 (VLDYLNAIFVVIFSSECLLKIFAL). At 1674–1679 (RYHYFI) the chain is on the cytoplasmic side. The chain crosses the membrane as a helical span at residues 1680 to 1703 (EPWNLFDVVVVILSILGLVLSDII). Residues 1704-1713 (EKYFVSPTLL) lie on the Extracellular side of the membrane. Residues 1714 to 1735 (RVVRVAKVGRVLRLVKGAKGIR) traverse the membrane as a helical; Voltage-sensor segment. Over 1736–1750 (TLLFALAMSLPALFN) the chain is Cytoplasmic. Residues 1751–1773 (ICLLLFLVMFIFAIFGMSFFMHV) form a helical membrane-spanning segment. Residues 1774–1787 (KEKSGINDVYNFKT) lie on the Extracellular side of the membrane. The segment at residues 1788-1810 (FGQSMILLFQMSTSAGWDGVLDA) is an intramembrane region (pore-forming). At 1811-1835 (IINEEACDPPDNDKGYPGNCGSATV) the chain is on the extracellular side. The chain crosses the membrane as a helical span at residues 1836 to 1860 (GITFLLSYLVISFLIVINMYIAVIL). The Cytoplasmic portion of the chain corresponds to 1861–2131 (ENYSQATEDV…PSITSRTADV (271 aa)). Positions 1877–1912 (DDYDMYYEIWQQFDPEGTQYIRYDQLSEFLDVLEPP) constitute an EF-hand domain. The disordered stretch occupies residues 2001 to 2096 (HKARGEGGGS…GSPGAGSAGR (96 aa)). Positions 2021–2035 (GDPDAGDPAPDEATD) are enriched in acidic residues. A compositionally biased stretch (low complexity) spans 2068 to 2088 (AAAAAAAAAAAAAAGTTTAGS).

The protein belongs to the sodium channel (TC 1.A.1.10) family. Para subfamily.

It is found in the cell membrane. Functionally, mediates the voltage-dependent sodium ion permeability of excitable membranes. Assuming opened or closed conformations in response to the voltage difference across the membrane, the protein forms a sodium-selective channel through which Na(+) ions may pass in accordance with their electrochemical gradient. This chain is Sodium channel protein para (para), found in Drosophila melanogaster (Fruit fly).